A 188-amino-acid polypeptide reads, in one-letter code: Tumor necrosis factor alpha-induced protein 8-like protein (188 aa).

It belongs to the TNFAIP8 family.

The protein is Tumor necrosis factor alpha-induced protein 8-like protein of Drosophila pseudoobscura pseudoobscura (Fruit fly).